Here is a 962-residue protein sequence, read N- to C-terminus: Glycine dehydrogenase (decarboxylating) (962 aa).

Lys-709 carries the N6-(pyridoxal phosphate)lysine modification.

This sequence belongs to the GcvP family. The glycine cleavage system is composed of four proteins: P, T, L and H. The cofactor is pyridoxal 5'-phosphate.

The catalysed reaction is N(6)-[(R)-lipoyl]-L-lysyl-[glycine-cleavage complex H protein] + glycine + H(+) = N(6)-[(R)-S(8)-aminomethyldihydrolipoyl]-L-lysyl-[glycine-cleavage complex H protein] + CO2. The glycine cleavage system catalyzes the degradation of glycine. The P protein binds the alpha-amino group of glycine through its pyridoxal phosphate cofactor; CO(2) is released and the remaining methylamine moiety is then transferred to the lipoamide cofactor of the H protein. This is Glycine dehydrogenase (decarboxylating) from Shewanella baltica (strain OS155 / ATCC BAA-1091).